Reading from the N-terminus, the 474-residue chain is Dihydrolipoyl dehydrogenase (474 aa).

Residues 36-44 (EAKDMGGTC), Lys-53, and Gly-119 each bind FAD. Cys-44 and Cys-49 are joined by a disulfide. NAD(+)-binding positions include 184 to 188 (GSGYI), Glu-207, and 275 to 278 (ATGR). Residues Asp-323 and Ala-331 each coordinate FAD. His-459 (proton acceptor) is an active-site residue.

The protein belongs to the class-I pyridine nucleotide-disulfide oxidoreductase family. In terms of assembly, homodimer. Requires FAD as cofactor.

The protein localises to the cell inner membrane. The enzyme catalyses N(6)-[(R)-dihydrolipoyl]-L-lysyl-[protein] + NAD(+) = N(6)-[(R)-lipoyl]-L-lysyl-[protein] + NADH + H(+). In terms of biological role, lipoamide dehydrogenase is a component of the alpha-ketoacid dehydrogenase complexes. This chain is Dihydrolipoyl dehydrogenase (lpdA), found in Synechocystis sp. (strain ATCC 27184 / PCC 6803 / Kazusa).